A 255-amino-acid chain; its full sequence is Ditrans,polycis-undecaprenyl-diphosphate synthase ((2E,6E)-farnesyl-diphosphate specific) (255 aa).

Aspartate 21 is an active-site residue. Aspartate 21 lines the Mg(2+) pocket. Substrate-binding positions include 22 to 25 (GNGR), tryptophan 26, arginine 34, histidine 38, and 66 to 68 (SSE). Catalysis depends on asparagine 69, which acts as the Proton acceptor. Substrate contacts are provided by residues tryptophan 70, arginine 72, arginine 189, and 195–197 (RIS). Glutamate 208 is a binding site for Mg(2+).

It belongs to the UPP synthase family. Homodimer. The cofactor is Mg(2+).

The catalysed reaction is 8 isopentenyl diphosphate + (2E,6E)-farnesyl diphosphate = di-trans,octa-cis-undecaprenyl diphosphate + 8 diphosphate. Catalyzes the sequential condensation of isopentenyl diphosphate (IPP) with (2E,6E)-farnesyl diphosphate (E,E-FPP) to yield (2Z,6Z,10Z,14Z,18Z,22Z,26Z,30Z,34E,38E)-undecaprenyl diphosphate (di-trans,octa-cis-UPP). UPP is the precursor of glycosyl carrier lipid in the biosynthesis of bacterial cell wall polysaccharide components such as peptidoglycan and lipopolysaccharide. In Xylella fastidiosa (strain 9a5c), this protein is Ditrans,polycis-undecaprenyl-diphosphate synthase ((2E,6E)-farnesyl-diphosphate specific).